The sequence spans 306 residues: MDALSKIFDDIHLNKSEYLYVKTQGEWAFHMLAQDALIAHIILMGSAHFTLQDGTTQTAYSGDIVLIPSGQAHFVSNDAQNKLIDCSNIQSFFDGHRNDAIELGTTSSDHGLIFTVRSHIDMHMGSPLLNALPSLIHIHHAMSSTGPEWLRVGLYFVALETQRIQPGRDKIFDHLMSILFIECVRDHIAQLDDPKSWLTALMHPELSNALAAIHAYPEKPWTVESLADQCCMSRSKFATLFQSIVHETPLAYLQQHRLRLAVQLLKTSQLNIQQIANKVGYSSETAFSQAFKRQFEQSPKHYRQQS.

The 99-residue stretch at 207-305 folds into the HTH araC/xylS-type domain; sequence SNALAAIHAY…EQSPKHYRQQ (99 aa). 2 consecutive DNA-binding regions (H-T-H motif) follow at residues 224–245 and 272–295; these read ESLADQCCMSRSKFATLFQSIV and IQQIANKVGYSSETAFSQAFKRQF.

It participates in hydrocarbon metabolism; alkane degradation. This protein activates the expression of the alkane 1-monooxygenase AlkM. This is HTH-type transcriptional regulator AlkR (alkR) from Acinetobacter baylyi (strain ATCC 33305 / BD413 / ADP1).